Consider the following 165-residue polypeptide: Xanthine-guanine phosphoribosyltransferase (165 aa).

5-phospho-alpha-D-ribose 1-diphosphate is bound by residues 41–42 (RG) and 98–106 (DDLTDTGKT). Aspartate 99 is a Mg(2+) binding site. The guanine site is built by aspartate 102 and isoleucine 145. Residues aspartate 102 and isoleucine 145 each contribute to the xanthine site. Residues 102 to 106 (DTGKT) and 144 to 145 (WI) contribute to the GMP site.

It belongs to the purine/pyrimidine phosphoribosyltransferase family. XGPT subfamily. As to quaternary structure, homotetramer. It depends on Mg(2+) as a cofactor.

It is found in the cell inner membrane. The enzyme catalyses GMP + diphosphate = guanine + 5-phospho-alpha-D-ribose 1-diphosphate. It carries out the reaction XMP + diphosphate = xanthine + 5-phospho-alpha-D-ribose 1-diphosphate. It catalyses the reaction IMP + diphosphate = hypoxanthine + 5-phospho-alpha-D-ribose 1-diphosphate. Its pathway is purine metabolism; GMP biosynthesis via salvage pathway; GMP from guanine: step 1/1. The protein operates within purine metabolism; XMP biosynthesis via salvage pathway; XMP from xanthine: step 1/1. Purine salvage pathway enzyme that catalyzes the transfer of the ribosyl-5-phosphate group from 5-phospho-alpha-D-ribose 1-diphosphate (PRPP) to the N9 position of the 6-oxopurines guanine and xanthine to form the corresponding ribonucleotides GMP (guanosine 5'-monophosphate) and XMP (xanthosine 5'-monophosphate), with the release of PPi. To a lesser extent, also acts on hypoxanthine. The polypeptide is Xanthine-guanine phosphoribosyltransferase (Brucella canis (strain ATCC 23365 / NCTC 10854 / RM-666)).